The primary structure comprises 120 residues: Large ribosomal subunit protein bL19 (120 aa).

It belongs to the bacterial ribosomal protein bL19 family.

This protein is located at the 30S-50S ribosomal subunit interface and may play a role in the structure and function of the aminoacyl-tRNA binding site. This is Large ribosomal subunit protein bL19 from Chlorobium limicola (strain DSM 245 / NBRC 103803 / 6330).